A 272-amino-acid chain; its full sequence is 4-hydroxy-tetrahydrodipicolinate reductase (272 aa).

10–15 contributes to the NAD(+) binding site; it reads GAAGRM. Residue arginine 37 coordinates NADP(+). Residues 100–102 and 124–127 each bind NAD(+); these read GTT and SGNM. Histidine 157 functions as the Proton donor/acceptor in the catalytic mechanism. Residue histidine 158 participates in (S)-2,3,4,5-tetrahydrodipicolinate binding. The Proton donor role is filled by lysine 161. Residue 167 to 168 participates in (S)-2,3,4,5-tetrahydrodipicolinate binding; that stretch reads GT.

This sequence belongs to the DapB family.

The protein localises to the cytoplasm. The enzyme catalyses (S)-2,3,4,5-tetrahydrodipicolinate + NAD(+) + H2O = (2S,4S)-4-hydroxy-2,3,4,5-tetrahydrodipicolinate + NADH + H(+). It catalyses the reaction (S)-2,3,4,5-tetrahydrodipicolinate + NADP(+) + H2O = (2S,4S)-4-hydroxy-2,3,4,5-tetrahydrodipicolinate + NADPH + H(+). Its pathway is amino-acid biosynthesis; L-lysine biosynthesis via DAP pathway; (S)-tetrahydrodipicolinate from L-aspartate: step 4/4. Functionally, catalyzes the conversion of 4-hydroxy-tetrahydrodipicolinate (HTPA) to tetrahydrodipicolinate. The chain is 4-hydroxy-tetrahydrodipicolinate reductase from Methylocella silvestris (strain DSM 15510 / CIP 108128 / LMG 27833 / NCIMB 13906 / BL2).